Reading from the N-terminus, the 587-residue chain is Arginine--tRNA ligase (587 aa).

The 'HIGH' region signature appears at 127–137 (PNLAKEMHVGH).

Belongs to the class-I aminoacyl-tRNA synthetase family. Monomer.

It is found in the cytoplasm. It carries out the reaction tRNA(Arg) + L-arginine + ATP = L-arginyl-tRNA(Arg) + AMP + diphosphate. The protein is Arginine--tRNA ligase of Pseudomonas aeruginosa (strain ATCC 15692 / DSM 22644 / CIP 104116 / JCM 14847 / LMG 12228 / 1C / PRS 101 / PAO1).